Reading from the N-terminus, the 577-residue chain is Sulfite reductase [NADPH] hemoprotein beta-component (577 aa).

4 residues coordinate [4Fe-4S] cluster: Cys-440, Cys-446, Cys-486, and Cys-490. A siroheme-binding site is contributed by Cys-490.

Belongs to the nitrite and sulfite reductase 4Fe-4S domain family. In terms of assembly, alpha(8)-beta(8). The alpha component is a flavoprotein, the beta component is a hemoprotein. Siroheme serves as cofactor. [4Fe-4S] cluster is required as a cofactor.

It catalyses the reaction hydrogen sulfide + 3 NADP(+) + 3 H2O = sulfite + 3 NADPH + 4 H(+). It participates in sulfur metabolism; hydrogen sulfide biosynthesis; hydrogen sulfide from sulfite (NADPH route): step 1/1. Component of the sulfite reductase complex that catalyzes the 6-electron reduction of sulfite to sulfide. This is one of several activities required for the biosynthesis of L-cysteine from sulfate. This is Sulfite reductase [NADPH] hemoprotein beta-component from Vibrio cholerae serotype O1 (strain ATCC 39315 / El Tor Inaba N16961).